We begin with the raw amino-acid sequence, 473 residues long: Photosystem II CP43 reaction center protein (473 aa).

Residues 1–14 (MKTLYSLRRFYHVE) constitute a propeptide that is removed on maturation. At Thr-15 the chain carries N-acetylthreonine. At Thr-15 the chain carries Phosphothreonine. 5 helical membrane-spanning segments follow: residues 69 to 93 (LFEV…PHLA), 134 to 155 (LLGP…KDRN), 178 to 200 (KALY…RKIT), 255 to 275 (KPFA…LSYS), and 291 to 312 (WFNN…ASQA). Glu-367 lines the [CaMn4O5] cluster pocket. A helical transmembrane segment spans residues 447 to 471 (RARAAAAGFEKGIDRDFEPVLSMTP).

It belongs to the PsbB/PsbC family. PsbC subfamily. PSII is composed of 1 copy each of membrane proteins PsbA, PsbB, PsbC, PsbD, PsbE, PsbF, PsbH, PsbI, PsbJ, PsbK, PsbL, PsbM, PsbT, PsbX, PsbY, PsbZ, Psb30/Ycf12, at least 3 peripheral proteins of the oxygen-evolving complex and a large number of cofactors. It forms dimeric complexes. It depends on Binds multiple chlorophylls and provides some of the ligands for the Ca-4Mn-5O cluster of the oxygen-evolving complex. It may also provide a ligand for a Cl- that is required for oxygen evolution. PSII binds additional chlorophylls, carotenoids and specific lipids. as a cofactor.

The protein resides in the plastid. It is found in the chloroplast thylakoid membrane. One of the components of the core complex of photosystem II (PSII). It binds chlorophyll and helps catalyze the primary light-induced photochemical processes of PSII. PSII is a light-driven water:plastoquinone oxidoreductase, using light energy to abstract electrons from H(2)O, generating O(2) and a proton gradient subsequently used for ATP formation. The protein is Photosystem II CP43 reaction center protein of Manihot esculenta (Cassava).